A 393-amino-acid chain; its full sequence is Phosphoglycerate kinase (393 aa).

Residues Asp21–Asn23, Arg37, His60–Arg63, Arg115, and Arg148 contribute to the substrate site. ATP is bound by residues Lys199, Glu321, and Gly347 to Thr350.

This sequence belongs to the phosphoglycerate kinase family. As to quaternary structure, monomer.

It is found in the cytoplasm. The catalysed reaction is (2R)-3-phosphoglycerate + ATP = (2R)-3-phospho-glyceroyl phosphate + ADP. It participates in carbohydrate degradation; glycolysis; pyruvate from D-glyceraldehyde 3-phosphate: step 2/5. This chain is Phosphoglycerate kinase, found in Dechloromonas aromatica (strain RCB).